The chain runs to 827 residues: Protein Jade-1 (827 aa).

Residues 1–35 are disordered; sequence MKRVCLPSSSEDSDDNGSLSTSWSQHSRSLPSFRH. The segment covering 16–30 has biased composition (polar residues); it reads NGSLSTSWSQHSRSL. The segment at 200-250 adopts a PHD-type 1 zinc-finger fold; it reads DVVCDVCQSPDGEDGNEMVFCDKCNICVHQACYGILKVPEGSWLCRTCALG. The segment at 252–286 adopts a C2HC pre-PHD-type zinc-finger fold; sequence QPKCLLCPKKGGAMKPTRSGTKWVHVSCALWIPEV. The PHD-type 2 zinc finger occupies 310–366; that stretch reads LLCSLCNEKVGACIQCSIKNCRTAFHVTCAFDHGLEMKTILTQEDEVKFKSYCPKHG. 2 disordered regions span residues 622-705 and 769-810; these read TVAK…SSSL and RTKE…SSSS. 2 stretches are compositionally biased toward basic and acidic residues: residues 646 to 661 and 669 to 682; these read SRTQ…EKPL and KHTE…EKKR. Over residues 692-705 the composition is skewed to polar residues; it reads ATASSNKKQCSSSL.

It belongs to the JADE family. Component of the HBO1 complex composed.

It is found in the nucleus. It localises to the chromosome. Its subcellular location is the cytoplasm. The protein resides in the cytoskeleton. The protein localises to the cilium basal body. In terms of biological role, scaffold subunit of some HBO1 complexes, which have a histone H4 acetyltransferase activity. Plays a key role in HBO1 complex by directing KAT7/HBO1 specificity towards histone H4 acetylation (H4K5ac, H4K8ac and H4K12ac), regulating DNA replication initiation, regulating DNA replication initiation. The sequence is that of Protein Jade-1 (jade1) from Xenopus laevis (African clawed frog).